An 80-amino-acid chain; its full sequence is Cytochrome c oxidase subunit 7B, mitochondrial (80 aa).

A mitochondrion-targeting transit peptide spans 1–24 (MFPLAKNALSRLRVQSIQQAVARQ). At 25–32 (IHQKRAPD) the chain is on the mitochondrial matrix side. The chain crosses the membrane as a helical span at residues 33 to 59 (FHDKYGNAVLASGATFCVAVWVYMATQ). Residues 60 to 80 (IGIEWNPSPVGRVTPKEWREQ) are Mitochondrial intermembrane-facing.

The protein belongs to the cytochrome c oxidase VIIb family. As to quaternary structure, component of the cytochrome c oxidase (complex IV, CIV), a multisubunit enzyme composed of 14 subunits. The complex is composed of a catalytic core of 3 subunits MT-CO1, MT-CO2 and MT-CO3, encoded in the mitochondrial DNA, and 11 supernumerary subunits COX4I1 (or COX4I2), COX5A, COX5B, COX6A2 (or COX6A1), COX6B1 (or COX6B2), COX6C, COX7A1 (or COX7A2), COX7B, COX7C, COX8B and NDUFA4, which are encoded in the nuclear genome. The complex exists as a monomer or a dimer and forms supercomplexes (SCs) in the inner mitochondrial membrane with NADH-ubiquinone oxidoreductase (complex I, CI) and ubiquinol-cytochrome c oxidoreductase (cytochrome b-c1 complex, complex III, CIII), resulting in different assemblies (supercomplex SCI(1)III(2)IV(1) and megacomplex MCI(2)III(2)IV(2)).

The protein resides in the mitochondrion inner membrane. Its pathway is energy metabolism; oxidative phosphorylation. In terms of biological role, component of the cytochrome c oxidase, the last enzyme in the mitochondrial electron transport chain which drives oxidative phosphorylation. The respiratory chain contains 3 multisubunit complexes succinate dehydrogenase (complex II, CII), ubiquinol-cytochrome c oxidoreductase (cytochrome b-c1 complex, complex III, CIII) and cytochrome c oxidase (complex IV, CIV), that cooperate to transfer electrons derived from NADH and succinate to molecular oxygen, creating an electrochemical gradient over the inner membrane that drives transmembrane transport and the ATP synthase. Cytochrome c oxidase is the component of the respiratory chain that catalyzes the reduction of oxygen to water. Electrons originating from reduced cytochrome c in the intermembrane space (IMS) are transferred via the dinuclear copper A center (CU(A)) of subunit 2 and heme A of subunit 1 to the active site in subunit 1, a binuclear center (BNC) formed by heme A3 and copper B (CU(B)). The BNC reduces molecular oxygen to 2 water molecules using 4 electrons from cytochrome c in the IMS and 4 protons from the mitochondrial matrix. Plays a role in proper central nervous system (CNS) development in vertebrates. This is Cytochrome c oxidase subunit 7B, mitochondrial (COX7B) from Bos taurus (Bovine).